The following is a 613-amino-acid chain: 4-hydroxy-3-methylbut-2-en-1-yl diphosphate synthase (flavodoxin) (613 aa).

Residues Cys-514, Cys-517, Cys-548, and Glu-555 each coordinate [4Fe-4S] cluster.

The protein belongs to the IspG family. [4Fe-4S] cluster is required as a cofactor.

It catalyses the reaction (2E)-4-hydroxy-3-methylbut-2-enyl diphosphate + oxidized [flavodoxin] + H2O + 2 H(+) = 2-C-methyl-D-erythritol 2,4-cyclic diphosphate + reduced [flavodoxin]. Its pathway is isoprenoid biosynthesis; isopentenyl diphosphate biosynthesis via DXP pathway; isopentenyl diphosphate from 1-deoxy-D-xylulose 5-phosphate: step 5/6. Its function is as follows. Converts 2C-methyl-D-erythritol 2,4-cyclodiphosphate (ME-2,4cPP) into 1-hydroxy-2-methyl-2-(E)-butenyl 4-diphosphate. This chain is 4-hydroxy-3-methylbut-2-en-1-yl diphosphate synthase (flavodoxin), found in Chlamydia pneumoniae (Chlamydophila pneumoniae).